The primary structure comprises 582 residues: Inactive metallocarboxypeptidase ECM14 (582 aa).

Residues 1–20 form the signal peptide; it reads MHILQVITGATLVSVPFVSA. Positions 21 to 172 are excised as a propeptide; it reads IPSSTSEFLP…QAVYESYPQP (152 aa). A Peptidase M14 domain is found at 200 to 522; sequence DYQPLSVIIP…NAVLVFGQFL (323 aa). Residues His-265 and Glu-268 each coordinate Zn(2+). Residues 265–268, Arg-323, and 340–341 each bind substrate; these read HARE and DR. Cys-334 and Cys-357 are disulfide-bonded. N-linked (GlcNAc...) asparagine glycans are attached at residues Asn-381 and Asn-387. His-397 serves as a coordination point for Zn(2+). 398-399 contacts substrate; sequence SY. Over residues 561 to 571 the composition is skewed to acidic residues; that stretch reads SNQLEDDDNEN. A disordered region spans residues 561–582; sequence SNQLEDDDNENDTLLGFRTQKV. Asn-571 carries an N-linked (GlcNAc...) asparagine glycan.

The protein belongs to the peptidase M14 family. The cofactor is Zn(2+).

The protein localises to the vacuole. It is found in the secreted. Functionally, inactive carboxypeptidase that may play a role in cell wall organization and biogenesis. The chain is Inactive metallocarboxypeptidase ECM14 (ECM14) from Coccidioides posadasii (strain C735) (Valley fever fungus).